A 547-amino-acid chain; its full sequence is Membrane transporter D1 (547 aa).

The Cytoplasmic portion of the chain corresponds to 1 to 2; that stretch reads MR. A helical membrane pass occupies residues 3 to 25; the sequence is ASVMLCAALGGFLFGYDTGVINA. At 26-43 the chain is on the extracellular side; that stretch reads ALFQMKDHFGFSEHSWQY. Residues 44-64 form a helical membrane-spanning segment; the sequence is ALIVAIAIAGAFVGAFISGFI. The Cytoplasmic segment spans residues 65-78; the sequence is SAAFGRRPCIAVAD. The helical transmembrane segment at 79 to 99 threads the bilayer; sequence ALFVIGSVLMGAAPNVEVVLV. Residues 100 to 101 are Extracellular-facing; that stretch reads SR. A helical membrane pass occupies residues 102 to 122; the sequence is VIVGLAIGISSATIPVYLAEV. Residues 123 to 136 lie on the Cytoplasmic side of the membrane; the sequence is TSPKHRGATIVLNN. A helical transmembrane segment spans residues 137-157; sequence LFLTGGQFVAAGFTAIMVVFT. Topologically, residues 158–164 are extracellular; it reads SKNIGWR. Residues 165 to 185 form a helical membrane-spanning segment; sequence VAIGIGALPAVVQAFCLLFFL. Over 186–245 the chain is Cytoplasmic; it reads PESPRWLLSKGHADRAKAVADKFEVDLCEFQEGDELPSVRIDYRPLMARDMRFRVVLSSG. The helical transmembrane segment at 246–266 threads the bilayer; sequence LQIIQQFSGINTIMYYSSVIL. Residues 267–276 are Extracellular-facing; sequence YDAGFRDAIM. The helical transmembrane segment at 277 to 297 threads the bilayer; the sequence is PVVLSIPLAFMNALFTAVAIF. Over 298–308 the chain is Cytoplasmic; sequence TVDRFGRRRML. The chain crosses the membrane as a helical span at residues 309–329; the sequence is LISVFGCLVLLVVIAIIGFFI. Over 330-339 the chain is Extracellular; that stretch reads GTRISYSVGG. The chain crosses the membrane as a helical span at residues 340 to 360; the sequence is GLFLALLAVFLALYAPGIGCI. Over 361 to 385 the chain is Cytoplasmic; it reads PWVIMGEIFPTHLRTSAASVATMAN. A helical membrane pass occupies residues 386-406; sequence WGANVLVSQVFPILMGAIGVG. Position 407 (Gly407) is a topological domain, extracellular. Residues 408-428 traverse the membrane as a helical segment; sequence TFTIISGLMALGCIFVYFFAV. The Cytoplasmic segment spans residues 429–547; it reads ETKGLTLEQI…AIKAAPHEPK (119 aa). Disordered regions lie at residues 449–468 and 510–547; these read PPRFHEEGESGESGAGYRED and VSNKFEERATSSSSDPQSLENQDEVRQAAIKAAPHEPK. The segment covering 519-529 has biased composition (polar residues); that stretch reads TSSSSDPQSLE.

This sequence belongs to the major facilitator superfamily. Sugar transporter (TC 2.A.1.1) family.

It localises to the membrane. This chain is Membrane transporter D1, found in Leishmania donovani.